Here is a 91-residue protein sequence, read N- to C-terminus: Defensin-like protein 220 (91 aa).

Residues 1-19 (MKTIFFFITFIVLVSSCTS) form the signal peptide. Cystine bridges form between Cys-61–Cys-78, Cys-64–Cys-83, and Cys-68–Cys-85.

It belongs to the DEFL family.

It is found in the secreted. The sequence is that of Defensin-like protein 220 from Arabidopsis thaliana (Mouse-ear cress).